A 469-amino-acid chain; its full sequence is tRNA(Ile)-lysidine synthase (469 aa).

26–31 contacts ATP; it reads SGGPDS.

Belongs to the tRNA(Ile)-lysidine synthase family.

The protein localises to the cytoplasm. The catalysed reaction is cytidine(34) in tRNA(Ile2) + L-lysine + ATP = lysidine(34) in tRNA(Ile2) + AMP + diphosphate + H(+). Its function is as follows. Ligates lysine onto the cytidine present at position 34 of the AUA codon-specific tRNA(Ile) that contains the anticodon CAU, in an ATP-dependent manner. Cytidine is converted to lysidine, thus changing the amino acid specificity of the tRNA from methionine to isoleucine. The chain is tRNA(Ile)-lysidine synthase from Shouchella clausii (strain KSM-K16) (Alkalihalobacillus clausii).